The chain runs to 282 residues: Bifunctional protein FolD (282 aa).

NADP(+)-binding positions include 165–167 and I231; that span reads GAS.

The protein belongs to the tetrahydrofolate dehydrogenase/cyclohydrolase family. Homodimer.

The enzyme catalyses (6R)-5,10-methylene-5,6,7,8-tetrahydrofolate + NADP(+) = (6R)-5,10-methenyltetrahydrofolate + NADPH. It catalyses the reaction (6R)-5,10-methenyltetrahydrofolate + H2O = (6R)-10-formyltetrahydrofolate + H(+). The protein operates within one-carbon metabolism; tetrahydrofolate interconversion. Functionally, catalyzes the oxidation of 5,10-methylenetetrahydrofolate to 5,10-methenyltetrahydrofolate and then the hydrolysis of 5,10-methenyltetrahydrofolate to 10-formyltetrahydrofolate. This Francisella tularensis subsp. holarctica (strain FTNF002-00 / FTA) protein is Bifunctional protein FolD.